Here is a 281-residue protein sequence, read N- to C-terminus: Ribose-phosphate pyrophosphokinase (281 aa).

Residues 33-35 (DGE) and 90-91 (RQ) each bind ATP. The Mg(2+) site is built by histidine 123 and aspartate 161. The active site involves lysine 185. Residues arginine 187 and aspartate 211 each coordinate D-ribose 5-phosphate.

It belongs to the ribose-phosphate pyrophosphokinase family. Class III (archaeal) subfamily. Requires Mg(2+) as cofactor.

The protein resides in the cytoplasm. It catalyses the reaction D-ribose 5-phosphate + ATP = 5-phospho-alpha-D-ribose 1-diphosphate + AMP + H(+). It participates in metabolic intermediate biosynthesis; 5-phospho-alpha-D-ribose 1-diphosphate biosynthesis; 5-phospho-alpha-D-ribose 1-diphosphate from D-ribose 5-phosphate (route I): step 1/1. Functionally, involved in the biosynthesis of the central metabolite phospho-alpha-D-ribosyl-1-pyrophosphate (PRPP) via the transfer of pyrophosphoryl group from ATP to 1-hydroxyl of ribose-5-phosphate (Rib-5-P). This Halobacterium salinarum (strain ATCC 29341 / DSM 671 / R1) protein is Ribose-phosphate pyrophosphokinase.